We begin with the raw amino-acid sequence, 155 residues long: MNDRGIIICVGIAFLIFIFLWAYFKNKKVKTGNYGNYSYYDKLTDRLDAKLGHDSSFMIQHYLDPENCPLYGDLPTLSQLVNLKQNNPSKYEELVNDGTVKRAVNIKALKTWLLLGSSNVDKFKHFMNQVNQLNIDKVDMLNLENALKYQLSKTQ.

Residues 5–25 traverse the membrane as a helical segment; that stretch reads GIIICVGIAFLIFIFLWAYFK.

Its subcellular location is the membrane. This is an uncharacterized protein from Acheta domesticus (House cricket).